The primary structure comprises 460 residues: Putative protein p41 (460 aa).

The region spanning 14–186 (INHLLDIKRS…WGQAWFVDQG (173 aa)) is the Helicase ATP-binding domain.

This chain is Putative protein p41 (41), found in Escherichia coli (Bacteriophage APSE-1).